The primary structure comprises 299 residues: HTH-type transcriptional regulator ArgP (299 aa).

Residues 2–58 (FDYKLLSALAAVIEQAGFERAAQVLGLSQSAISQRIKLLEARVGQPVLVRVTPPAPT) form the HTH lysR-type domain. Positions 19 to 38 (FERAAQVLGLSQSAISQRIK) form a DNA-binding region, H-T-H motif.

It belongs to the LysR transcriptional regulatory family. Homodimer.

In terms of biological role, controls the transcription of genes involved in arginine and lysine metabolism. The chain is HTH-type transcriptional regulator ArgP from Pseudomonas fluorescens (strain ATCC BAA-477 / NRRL B-23932 / Pf-5).